Here is a 171-residue protein sequence, read N- to C-terminus: Ferritin heavy chain (171 aa).

Met-1 carries the N-acetylmethionine modification. Thr-2 bears the N-acetylthreonine; in Ferritin heavy chain, N-terminally processed mark. A Ferritin-like diiron domain is found at 11 to 160 (QNYHQDSEAA…DHITNLRKMG (150 aa)). Residues Glu-28, Glu-63, His-66, Glu-108, and Gln-142 each contribute to the Fe cation site.

It belongs to the ferritin family. Oligomer of 24 subunits. There are two types of subunits: L (light) chain and H (heavy) chain. The major chain can be light or heavy, depending on the species and tissue type. The functional molecule forms a roughly spherical shell with a diameter of 12 nm and contains a central cavity into which the insoluble mineral iron core is deposited. Interacts with NCOA4; NCOA4 promotes targeting of the iron-binding ferritin complex to autolysosomes following starvation or iron depletion.

The protein localises to the cytoplasm. It localises to the lysosome. The protein resides in the cytoplasmic vesicle. Its subcellular location is the autophagosome. It catalyses the reaction 4 Fe(2+) + O2 + 4 H(+) = 4 Fe(3+) + 2 H2O. In terms of biological role, stores iron in a soluble, non-toxic, readily available form. Important for iron homeostasis. Has ferroxidase activity. Iron is taken up in the ferrous form and deposited as ferric hydroxides after oxidation. Also plays a role in delivery of iron to cells. Mediates iron uptake in capsule cells of the developing kidney. Delivery to lysosomes is mediated by the cargo receptor NCOA4 for autophagic degradation and release of iron. In Ovis aries (Sheep), this protein is Ferritin heavy chain (FTH1).